A 561-amino-acid chain; its full sequence is Glutamate--tRNA ligase (561 aa).

The short motif at 107-117 is the 'HIGH' region element; it reads PNPSGPLHLGH.

Belongs to the class-I aminoacyl-tRNA synthetase family. Glutamate--tRNA ligase type 2 subfamily.

It localises to the cytoplasm. It carries out the reaction tRNA(Glu) + L-glutamate + ATP = L-glutamyl-tRNA(Glu) + AMP + diphosphate. Functionally, catalyzes the attachment of glutamate to tRNA(Glu) in a two-step reaction: glutamate is first activated by ATP to form Glu-AMP and then transferred to the acceptor end of tRNA(Glu). In Methanoculleus marisnigri (strain ATCC 35101 / DSM 1498 / JR1), this protein is Glutamate--tRNA ligase.